The sequence spans 255 residues: D-aminoacyl-tRNA deacylase (255 aa).

The protein belongs to the DtdA deacylase family. Monomer. Zn(2+) serves as cofactor.

It carries out the reaction a D-aminoacyl-tRNA + H2O = a tRNA + a D-alpha-amino acid + H(+). The catalysed reaction is glycyl-tRNA(Ala) + H2O = tRNA(Ala) + glycine + H(+). Its function is as follows. D-aminoacyl-tRNA deacylase with broad substrate specificity. By recycling D-aminoacyl-tRNA to D-amino acids and free tRNA molecules, this enzyme counteracts the toxicity associated with the formation of D-aminoacyl-tRNA entities in vivo. In Methanocaldococcus jannaschii (strain ATCC 43067 / DSM 2661 / JAL-1 / JCM 10045 / NBRC 100440) (Methanococcus jannaschii), this protein is D-aminoacyl-tRNA deacylase.